Consider the following 416-residue polypeptide: Transcription termination factor Rho (416 aa).

One can recognise a Rho RNA-BD domain in the interval L51–K121. Residues G162 to G167, K174 to T179, and R205 contribute to the ATP site.

It belongs to the Rho family. Homohexamer. The homohexamer assembles into an open ring structure.

Facilitates transcription termination by a mechanism that involves Rho binding to the nascent RNA, activation of Rho's RNA-dependent ATPase activity, and release of the mRNA from the DNA template. The protein is Transcription termination factor Rho of Streptobacillus moniliformis (strain ATCC 14647 / DSM 12112 / NCTC 10651 / 9901).